An 87-amino-acid polypeptide reads, in one-letter code: Phosphoribosyl-ATP pyrophosphatase (87 aa).

It belongs to the PRA-PH family.

The protein resides in the cytoplasm. It catalyses the reaction 1-(5-phospho-beta-D-ribosyl)-ATP + H2O = 1-(5-phospho-beta-D-ribosyl)-5'-AMP + diphosphate + H(+). It functions in the pathway amino-acid biosynthesis; L-histidine biosynthesis; L-histidine from 5-phospho-alpha-D-ribose 1-diphosphate: step 2/9. The sequence is that of Phosphoribosyl-ATP pyrophosphatase from Corynebacterium diphtheriae (strain ATCC 700971 / NCTC 13129 / Biotype gravis).